Consider the following 428-residue polypeptide: MAKEKPHVNIVFIGHVDHGKSTTIGRLLFDTANIPEQIIKKFEEMGEKGKSFKFAWVMDRLKEERERGITIDVAHTKFETPHRYITIIDAPGHRDFVKNMITGASQADAAVLIVAATDGVMPQTKEHAFLARTLGINHIIVGVNKMDAVKYDEKRFKEVATQVTKLLQMLGYKNFPVIPISAWEGDNVVKKSDKMPWYNGPTLIEALDQIPEPEKPTDKPLRIPIQDVYSIKGVGTVPVGRVETGVLKVGDVIIFEPASTIFHKPIQGEVKSIEMHHESMPEALPGDNIGFNVRGVGKNDIKRGDVAGHTTNPPTVVRPRDTFKAQIIVLNHPTAITIGYTPVLHAHTTQVAVRFEQLLAKLDPRTGNVVEENPQFIKTGDSAIVVLRPTKPMVIEPVKELPQLGRFAIRDMGQTVAAGMVISIQKGE.

A tr-type G domain is found at 5–217 (KPHVNIVFIG…DQIPEPEKPT (213 aa)). The tract at residues 14–21 (GHVDHGKS) is G1. 14 to 21 (GHVDHGKS) is a GTP binding site. Ser-21 serves as a coordination point for Mg(2+). Positions 68 to 72 (GITID) are G2. Positions 89-92 (DAPG) are G3. Residues 89 to 93 (DAPGH) and 144 to 147 (NKMD) contribute to the GTP site. The G4 stretch occupies residues 144–147 (NKMD). Residues 181–183 (SAW) are G5.

This sequence belongs to the TRAFAC class translation factor GTPase superfamily. Classic translation factor GTPase family. EF-Tu/EF-1A subfamily.

It is found in the cytoplasm. The catalysed reaction is GTP + H2O = GDP + phosphate + H(+). Its function is as follows. GTP hydrolase that promotes the GTP-dependent binding of aminoacyl-tRNA to the A-site of ribosomes during protein biosynthesis. This chain is Elongation factor 1-alpha, found in Thermococcus sibiricus (strain DSM 12597 / MM 739).